A 274-amino-acid polypeptide reads, in one-letter code: Outer surface protein A (274 aa).

The first 16 residues, 1–16 (MKKYLLGIGLILALIA), serve as a signal peptide directing secretion. The N-palmitoyl cysteine moiety is linked to residue Cys-17. The S-diacylglycerol cysteine moiety is linked to residue Cys-17.

This sequence belongs to the OspA lipoprotein family.

It localises to the cell outer membrane. The protein resides in the cell surface. In Borreliella burgdorferi (Lyme disease spirochete), this protein is Outer surface protein A.